Reading from the N-terminus, the 699-residue chain is Elongation factor G (699 aa).

In terms of domain architecture, tr-type G spans 8–283 (EHIRNIGICA…AVVDFLPSPI (276 aa)). GTP-binding positions include 17–24 (AHIDAGKT), 81–85 (DTPGH), and 135–138 (NKMD).

This sequence belongs to the TRAFAC class translation factor GTPase superfamily. Classic translation factor GTPase family. EF-G/EF-2 subfamily.

It localises to the cytoplasm. Functionally, catalyzes the GTP-dependent ribosomal translocation step during translation elongation. During this step, the ribosome changes from the pre-translocational (PRE) to the post-translocational (POST) state as the newly formed A-site-bound peptidyl-tRNA and P-site-bound deacylated tRNA move to the P and E sites, respectively. Catalyzes the coordinated movement of the two tRNA molecules, the mRNA and conformational changes in the ribosome. The protein is Elongation factor G of Rickettsia rickettsii.